We begin with the raw amino-acid sequence, 212 residues long: Thymidylate kinase (212 aa).

An ATP-binding site is contributed by 11 to 18 (GPEGAGKT).

Belongs to the thymidylate kinase family.

The enzyme catalyses dTMP + ATP = dTDP + ADP. Functionally, phosphorylation of dTMP to form dTDP in both de novo and salvage pathways of dTTP synthesis. The protein is Thymidylate kinase of Streptococcus pneumoniae (strain ATCC 700669 / Spain 23F-1).